We begin with the raw amino-acid sequence, 330 residues long: DNA repair and recombination protein RadA (330 aa).

124 to 131 (GEFGSGKT) contacts ATP.

This sequence belongs to the eukaryotic RecA-like protein family.

Involved in DNA repair and in homologous recombination. Binds and assemble on single-stranded DNA to form a nucleoprotein filament. Hydrolyzes ATP in a ssDNA-dependent manner and promotes DNA strand exchange between homologous DNA molecules. In Pyrobaculum neutrophilum (strain DSM 2338 / JCM 9278 / NBRC 100436 / V24Sta) (Thermoproteus neutrophilus), this protein is DNA repair and recombination protein RadA.